Reading from the N-terminus, the 138-residue chain is Large ribosomal subunit protein uL16 (138 aa).

Residues methionine 1–glycine 19 show a composition bias toward basic residues. The disordered stretch occupies residues methionine 1 to alanine 21.

This sequence belongs to the universal ribosomal protein uL16 family. In terms of assembly, part of the 50S ribosomal subunit.

In terms of biological role, binds 23S rRNA and is also seen to make contacts with the A and possibly P site tRNAs. The chain is Large ribosomal subunit protein uL16 from Granulibacter bethesdensis (strain ATCC BAA-1260 / CGDNIH1).